Reading from the N-terminus, the 310-residue chain is Prohibitin-2 (310 aa).

A helical; Signal-anchor for type II membrane protein transmembrane segment spans residues 38–58; it reads FAGLGGLLLLGGGALFINNAL. Positions 130–144 are interaction with ATG8; sequence DVVQLPTIYRTLGQD. The AIM motif lies at 138-141; that stretch reads YRTL. The stretch at 212 to 253 forms a coiled coil; it reads NAVEAKQIAQQDAQRAAFVVDKARQEKQGMVVRAQGEAKSAE.

Belongs to the prohibitin family. In terms of assembly, the mitochondrial prohibitin complex consists of two subunits (PHB1 and PHB2). The subunits assemble into a membrane-associated ring-shaped supercomplex of approximately 1 mDa. The mitochondrial prohibitin complex interacts with the m-AAA protease, a heterohexamer composed of YTA12/RCA1 and YTA10/AFG3. The mitochondrial prohibitin complex interacts with ATG8 and the interaction may support mitophagosome assembly. The N-terminus is blocked.

Its subcellular location is the mitochondrion inner membrane. Its function is as follows. Prohibitin probably acts as a holdase/unfoldase for the stabilization of newly synthesized mitochondrial proteins. Involved in mitophagy; may act as an adapter for ATG8 that supports mitophagosome assembly. Negatively regulates the proteolytic processing of ATG32 via the i-AAA protease. Acts as a negative regulator of the m-AAA protease. This chain is Prohibitin-2 (PHB2), found in Saccharomyces cerevisiae (strain ATCC 204508 / S288c) (Baker's yeast).